Consider the following 413-residue polypeptide: Short-chain specific acyl-CoA dehydrogenase, mitochondrial (413 aa).

The transit peptide at 1–24 (MAAALLARACGPVRGALWPRDCRR) directs the protein to the mitochondrion. Residue threonine 27 is modified to Phosphothreonine. The residue at position 51 (lysine 51) is an N6-acetyllysine; alternate. Lysine 51 carries the post-translational modification N6-succinyllysine; alternate. At lysine 72 the chain carries N6-acetyllysine. Residue lysine 129 is modified to N6-acetyllysine; alternate. Lysine 129 bears the N6-succinyllysine; alternate mark. FAD-binding positions include 152-161 (FALSEPGNGS) and 185-187 (WIT). A substrate-binding site is contributed by serine 161. The residue at position 208 (lysine 208) is an N6-acetyllysine. The residue at position 262 (lysine 262) is an N6-acetyllysine; alternate. Lysine 262 is subject to N6-succinyllysine; alternate. 269–272 (DMGR) is a substrate binding site. Arginine 297 contributes to the FAD binding site. Lysine 306 is modified (N6-acetyllysine; alternate). N6-succinyllysine; alternate is present on lysine 306. FAD-binding positions include glutamine 308 and 366–370 (QILGG). Glutamate 393 serves as the catalytic Proton acceptor. Residue glycine 394 coordinates substrate. 395–397 (TSE) serves as a coordination point for FAD.

It belongs to the acyl-CoA dehydrogenase family. In terms of assembly, homotetramer. The cofactor is FAD.

It is found in the mitochondrion matrix. It carries out the reaction a short-chain 2,3-saturated fatty acyl-CoA + oxidized [electron-transfer flavoprotein] + H(+) = a short-chain (2E)-enoyl-CoA + reduced [electron-transfer flavoprotein]. The catalysed reaction is butanoyl-CoA + oxidized [electron-transfer flavoprotein] + H(+) = (2E)-butenoyl-CoA + reduced [electron-transfer flavoprotein]. It catalyses the reaction pentanoyl-CoA + oxidized [electron-transfer flavoprotein] + H(+) = (2E)-pentenoyl-CoA + reduced [electron-transfer flavoprotein]. The enzyme catalyses hexanoyl-CoA + oxidized [electron-transfer flavoprotein] + H(+) = (2E)-hexenoyl-CoA + reduced [electron-transfer flavoprotein]. It participates in lipid metabolism; mitochondrial fatty acid beta-oxidation. Short-chain specific acyl-CoA dehydrogenase is one of the acyl-CoA dehydrogenases that catalyze the first step of mitochondrial fatty acid beta-oxidation, an aerobic process breaking down fatty acids into acetyl-CoA and allowing the production of energy from fats. The first step of fatty acid beta-oxidation consists in the removal of one hydrogen from C-2 and C-3 of the straight-chain fatty acyl-CoA thioester, resulting in the formation of trans-2-enoyl-CoA. Among the different mitochondrial acyl-CoA dehydrogenases, short-chain specific acyl-CoA dehydrogenase acts specifically on acyl-CoAs with saturated 4 to 6 carbons long primary chains. The chain is Short-chain specific acyl-CoA dehydrogenase, mitochondrial (ACADS) from Sus scrofa (Pig).